Here is a 103-residue protein sequence, read N- to C-terminus: Small ribosomal subunit protein uS10 (103 aa).

It belongs to the universal ribosomal protein uS10 family. In terms of assembly, part of the 30S ribosomal subunit.

Involved in the binding of tRNA to the ribosomes. The sequence is that of Small ribosomal subunit protein uS10 from Thioalkalivibrio sulfidiphilus (strain HL-EbGR7).